Consider the following 153-residue polypeptide: Cyanate hydratase (153 aa).

Active-site residues include Arg88, Glu91, and Ser114.

This sequence belongs to the cyanase family.

It catalyses the reaction cyanate + hydrogencarbonate + 3 H(+) = NH4(+) + 2 CO2. In terms of biological role, catalyzes the reaction of cyanate with bicarbonate to produce ammonia and carbon dioxide. This is Cyanate hydratase from Mycolicibacterium vanbaalenii (strain DSM 7251 / JCM 13017 / BCRC 16820 / KCTC 9966 / NRRL B-24157 / PYR-1) (Mycobacterium vanbaalenii).